The primary structure comprises 336 residues: Methionine import ATP-binding protein MetN (336 aa).

An ABC transporter domain is found at 2 to 254; the sequence is IKIKNLKKYY…PNAKMKEFLG (253 aa). 34 to 41 contacts ATP; sequence GHSGAGKS.

The protein belongs to the ABC transporter superfamily. Methionine importer (TC 3.A.1.24) family. The complex is composed of two ATP-binding proteins (MetN), two transmembrane proteins (MetI) and a solute-binding protein (MetQ).

It is found in the cell inner membrane. It catalyses the reaction L-methionine(out) + ATP + H2O = L-methionine(in) + ADP + phosphate + H(+). The catalysed reaction is D-methionine(out) + ATP + H2O = D-methionine(in) + ADP + phosphate + H(+). In terms of biological role, part of the ABC transporter complex MetNIQ involved in methionine import. Responsible for energy coupling to the transport system. The polypeptide is Methionine import ATP-binding protein MetN (Campylobacter jejuni subsp. jejuni serotype O:2 (strain ATCC 700819 / NCTC 11168)).